We begin with the raw amino-acid sequence, 278 residues long: Orotidine 5'-phosphate decarboxylase (278 aa).

Lys96 serves as the catalytic Proton donor.

This sequence belongs to the OMP decarboxylase family. Type 2 subfamily.

It catalyses the reaction orotidine 5'-phosphate + H(+) = UMP + CO2. It functions in the pathway pyrimidine metabolism; UMP biosynthesis via de novo pathway; UMP from orotate: step 2/2. This is Orotidine 5'-phosphate decarboxylase (pyrF) from Streptomyces coelicolor (strain ATCC BAA-471 / A3(2) / M145).